The primary structure comprises 467 residues: Argininosuccinate lyase (467 aa).

It belongs to the lyase 1 family. Argininosuccinate lyase subfamily.

The protein localises to the cytoplasm. The enzyme catalyses 2-(N(omega)-L-arginino)succinate = fumarate + L-arginine. It functions in the pathway amino-acid biosynthesis; L-arginine biosynthesis; L-arginine from L-ornithine and carbamoyl phosphate: step 3/3. The sequence is that of Argininosuccinate lyase from Campylobacter curvus (strain 525.92).